A 143-amino-acid polypeptide reads, in one-letter code: Transcriptional regulator MraZ (143 aa).

SpoVT-AbrB domains follow at residues 5 to 47 (EFLH…PMDE) and 76 to 119 (AIEC…ANDA).

The protein belongs to the MraZ family. As to quaternary structure, forms oligomers.

The protein resides in the cytoplasm. It localises to the nucleoid. This is Transcriptional regulator MraZ from Oceanobacillus iheyensis (strain DSM 14371 / CIP 107618 / JCM 11309 / KCTC 3954 / HTE831).